A 1492-amino-acid polypeptide reads, in one-letter code: Collagen alpha-1(II) chain (1492 aa).

The N-terminal stretch at 1 to 26 (MFSFVDSRTLVLFAATQVILLAVVRC) is a signal peptide. The propeptide at 27–186 (QDEEDVLATG…PPGLGGNFAA (160 aa)) is N-terminal propeptide. The VWFC domain maps to 36 to 94 (GSCVQHGQRYSDKDVWKPEPCQICVCDTGNVLCDEIICEDPKDCPNAEIPFGECCPICP). Positions 98 to 1255 (SSTSSGQGVL…ADQASSSVPQ (1158 aa)) are disordered. 2 stretches are compositionally biased toward basic and acidic residues: residues 110-121 (QKGEPGDIKDVV) and 138-159 (PRGD…RDGE). Over residues 163-178 (PGNPGPVGPPGPPGPP) the composition is skewed to pro residues. The segment covering 197-208 (GGAQMGVMQGPM) has biased composition (low complexity). The triple-helical region stretch occupies residues 206 to 1219 (GPMGPMGPRG…PGPPGPPGPP (1014 aa)). Residues 213–222 (PRGPPGPTGA) are compositionally biased toward pro residues. The segment covering 223–234 (PGPQGFQGNPGE) has biased composition (low complexity). A compositionally biased stretch (gly residues) spans 236–245 (GEPGAGGPMG). Positions 256-270 (PGDDGEAGKPGKSGE) are enriched in basic and acidic residues. Residues 311–320 (GAKGEGGATG) are compositionally biased toward gly residues. Low complexity-rich tracts occupy residues 321–333 (EAGS…PRGL), 340–355 (PGAS…DGLP), 366–376 (PAGAPGFPGAP), and 396–436 (PRGE…AGAP). Pro residues predominate over residues 438–447 (FPGPRGPPGP). Low complexity-rich tracts occupy residues 480–490 (SAGPQGAPGPA) and 501–517 (EPGA…RGAP). A compositionally biased stretch (gly residues) spans 539 to 548 (GVPGLGGPKG). 2 stretches are compositionally biased toward low complexity: residues 627–636 (LLGAPGLRGL) and 645–655 (AQGPNGPAGPA). 4-hydroxyproline is present on residues Pro664 and Pro673. Pro675 is modified (3-hydroxyproline). Residues Pro676 and Pro679 each carry the 4-hydroxyproline modification. Positions 711-741 (ERGSSGPQGLQGPRGLPGTPGTDGPKGATGP) are enriched in low complexity. A compositionally biased stretch (basic and acidic residues) spans 769 to 780 (KGDRGDTGEKGP). 2 stretches are compositionally biased toward low complexity: residues 838–850 (AGFA…DGQA) and 894–910 (AQGP…AGRV). At Pro912 the chain carries 3-hydroxyproline. 3 positions are modified to 4-hydroxyproline: Pro913, Pro919, and Pro925. The span at 919–930 (PGPSGAPGSAGK) shows a compositional bias: low complexity. Gly residues predominate over residues 1010-1019 (GKQGGPGSAG). Low complexity predominate over residues 1105 to 1114 (SGPAGARGLP). Over residues 1120–1134 (RGDKGEAGEAGERGQ) the composition is skewed to basic and acidic residues. 2 stretches are compositionally biased toward low complexity: residues 1140–1159 (FTGL…QGAS) and 1176–1186 (PSGKDGSNGLP). Pro1149 carries the 3-hydroxyproline modification. Position 1186 is a 4-hydroxyproline (Pro1186). The residue at position 1191 (Pro1191) is a 3-hydroxyproline. Residue Pro1192 is modified to 4-hydroxyproline. Positions 1204–1221 (AGPPGQPGPPGPPGPPGP) are enriched in pro residues. A 3-hydroxyproline modification is found at Pro1206. Residues Pro1207 and Pro1210 each carry the 4-hydroxyproline modification. Pro1212 is modified (3-hydroxyproline). 4-hydroxyproline occurs at positions 1213 and 1216. Position 1218 is a 3-hydroxyproline (Pro1218). Pro1219 is modified (4-hydroxyproline). The segment at 1220–1246 (GPGIDMSAFAGLSQPEKGPDPMRYMRA) is nonhelical region (C-terminal). Positions 1236 to 1245 (KGPDPMRYMR) are enriched in basic and acidic residues. Residues 1247 to 1492 (DQASSSVPQR…GVDIGPVCFL (246 aa)) constitute a propeptide, C-terminal propeptide. Residues 1258 to 1492 (VDVEATLKSL…GVDIGPVCFL (235 aa)) form the Fibrillar collagen NC1 domain. Intrachain disulfides connect Cys1288-Cys1320, Cys1328-Cys1490, and Cys1398-Cys1443. Ca(2+) contacts are provided by Asp1306, Asn1308, Gln1309, Cys1311, and Asp1314. N-linked (GlcNAc...) asparagine glycosylation is present at Asn1393.

The protein belongs to the fibrillar collagen family. As to quaternary structure, homotrimers of alpha 1(II) chains. In terms of processing, contains mostly 4-hydroxyproline. Prolines at the third position of the tripeptide repeating unit (G-X-P) are 4-hydroxylated in some or all of the chains. Post-translationally, contains 3-hydroxyproline at a few sites. This modification occurs on the first proline residue in the sequence motif Gly-Pro-Hyp, where Hyp is 4-hydroxyproline. Lysine residues at the third position of the tripeptide repeating unit (G-X-Y) are 5-hydroxylated in some or all of the chains. In terms of processing, O-glycosylated on hydroxylated lysine residues. The O-linked glycan consists of a Glc-Gal disaccharide.

It localises to the secreted. It is found in the extracellular space. The protein localises to the extracellular matrix. Its function is as follows. Type II collagen is specific for cartilaginous tissues. It is essential for the normal embryonic development of the skeleton, for linear growth and for the ability of cartilage to resist compressive forces. The sequence is that of Collagen alpha-1(II) chain from Xenopus tropicalis (Western clawed frog).